A 234-amino-acid polypeptide reads, in one-letter code: Probable plastid-lipid-associated protein 5, chloroplastic (234 aa).

Residues 1–45 constitute a chloroplast transit peptide; the sequence is MALPWCLKTGVLTSPAAGFNHPSDSGFAVPTKLLSIRKGDRERLR.

Belongs to the PAP/fibrillin family.

The protein localises to the plastid. The protein resides in the chloroplast thylakoid. The chain is Probable plastid-lipid-associated protein 5, chloroplastic (PAP5) from Arabidopsis thaliana (Mouse-ear cress).